Here is a 392-residue protein sequence, read N- to C-terminus: F-box protein At5g65850 (392 aa).

One can recognise an F-box domain in the interval 29–78 (TEKSVQIPVDIIIEILLRLPAKSIATCRCVSKLWISVICRQDFTELFLTR).

This Arabidopsis thaliana (Mouse-ear cress) protein is F-box protein At5g65850.